A 555-amino-acid chain; its full sequence is CTP synthase (555 aa).

The tract at residues 1–265 is amidoligase domain; the sequence is MTRYIFITGG…GNRVCEKLNI (265 aa). S13 provides a ligand contact to CTP. S13 provides a ligand contact to UTP. ATP-binding positions include 14–19 and D71; that span reads SLGKGI. Residues D71 and E139 each contribute to the Mg(2+) site. Residues 146–148, 186–191, and K222 contribute to the CTP site; these read DIE and KTKPTQ. Residues 186 to 191 and K222 each bind UTP; that span reads KTKPTQ. The region spanning 290–541 is the Glutamine amidotransferase type-1 domain; it reads TVAVVGKYVD…IKAGLAAKEA (252 aa). G351 contacts L-glutamine. Catalysis depends on C378, which acts as the Nucleophile; for glutamine hydrolysis. L-glutamine is bound by residues 379–382, E402, and R469; that span reads LGMQ. Residues H514 and E516 contribute to the active site.

It belongs to the CTP synthase family. In terms of assembly, homotetramer.

The enzyme catalyses UTP + L-glutamine + ATP + H2O = CTP + L-glutamate + ADP + phosphate + 2 H(+). It catalyses the reaction L-glutamine + H2O = L-glutamate + NH4(+). The catalysed reaction is UTP + NH4(+) + ATP = CTP + ADP + phosphate + 2 H(+). Its pathway is pyrimidine metabolism; CTP biosynthesis via de novo pathway; CTP from UDP: step 2/2. With respect to regulation, allosterically activated by GTP, when glutamine is the substrate; GTP has no effect on the reaction when ammonia is the substrate. The allosteric effector GTP functions by stabilizing the protein conformation that binds the tetrahedral intermediate(s) formed during glutamine hydrolysis. Inhibited by the product CTP, via allosteric rather than competitive inhibition. Functionally, catalyzes the ATP-dependent amination of UTP to CTP with either L-glutamine or ammonia as the source of nitrogen. Regulates intracellular CTP levels through interactions with the four ribonucleotide triphosphates. The polypeptide is CTP synthase (Coxiella burnetii (strain Dugway 5J108-111)).